The chain runs to 150 residues: Large ribosomal subunit protein bL9 (150 aa).

It belongs to the bacterial ribosomal protein bL9 family.

Binds to the 23S rRNA. The sequence is that of Large ribosomal subunit protein bL9 from Burkholderia mallei (strain NCTC 10247).